Consider the following 590-residue polypeptide: Aspartate--tRNA(Asp/Asn) ligase (590 aa).

L-aspartate is bound at residue E173. The aspartate stretch occupies residues 197–200 (QIFK). Position 219 (R219) interacts with L-aspartate. ATP-binding positions include 219–221 (RDE) and Q228. H450 contributes to the L-aspartate binding site. An ATP-binding site is contributed by E484. Residue R491 participates in L-aspartate binding. Residue 536-539 (GLDR) participates in ATP binding.

Belongs to the class-II aminoacyl-tRNA synthetase family. Type 1 subfamily. In terms of assembly, homodimer.

It is found in the cytoplasm. The enzyme catalyses tRNA(Asx) + L-aspartate + ATP = L-aspartyl-tRNA(Asx) + AMP + diphosphate. Aspartyl-tRNA synthetase with relaxed tRNA specificity since it is able to aspartylate not only its cognate tRNA(Asp) but also tRNA(Asn). Reaction proceeds in two steps: L-aspartate is first activated by ATP to form Asp-AMP and then transferred to the acceptor end of tRNA(Asp/Asn). This chain is Aspartate--tRNA(Asp/Asn) ligase, found in Coxiella burnetii (strain RSA 493 / Nine Mile phase I).